The following is a 135-amino-acid chain: Protein PsiE homolog (135 aa).

Helical transmembrane passes span 14–34 (LQTI…IFLV), 54–74 (YQLI…ALIV), 82–102 (HFPL…LIIV), and 107–127 (PSDT…LYLA).

It belongs to the PsiE family.

The protein resides in the cell inner membrane. The sequence is that of Protein PsiE homolog from Pectobacterium carotovorum subsp. carotovorum (strain PC1).